A 148-amino-acid chain; its full sequence is Large ribosomal subunit protein bL9 (148 aa).

The protein belongs to the bacterial ribosomal protein bL9 family.

Binds to the 23S rRNA. This chain is Large ribosomal subunit protein bL9, found in Syntrophobacter fumaroxidans (strain DSM 10017 / MPOB).